The chain runs to 135 residues: MAHRIVTQVVVTGARVFGRAFAEAYKQASAASKYQQKTGKSAGGSSSSGITLDEACKILNVKPPQAGETNLEQVMERFKKLFDLNDPQKGGSFYLQSKILRARERIEAEVREAERKAAHEKELKEGWKPKVYKDR.

The tract at residues alanine 30–glycine 49 is disordered. A compositionally biased stretch (low complexity) spans glycine 39 to glycine 49. Residues glutamate 54–arginine 111 form a J-like region. A disordered region spans residues glutamate 114–arginine 135.

This sequence belongs to the TIM16/PAM16 family. As to quaternary structure, heterodimer with PAM18/pamR. Component of the PAM complex, at least composed of mtHsp70, MGE1/mgeA, tim44, PAM16/pamP, PAM17/pamQ and PAM18/pamR.

It is found in the mitochondrion inner membrane. In terms of biological role, essential component of the PAM complex, a complex required for the translocation of transit peptide-containing proteins from the inner membrane into the mitochondrial matrix in an ATP-dependent manner. In the complex, it is required to regulate activity of mtHSP70 (SSC1/sscA) via its interaction with PAM18/TIM14. May act by positioning PAM18/pamR in juxtaposition to mtHSP70 at the translocon to maximize ATPase stimulation. This chain is Mitochondrial import inner membrane translocase subunit tim16 (pam16), found in Emericella nidulans (strain FGSC A4 / ATCC 38163 / CBS 112.46 / NRRL 194 / M139) (Aspergillus nidulans).